The chain runs to 358 residues: Photosystem II protein D1 2 (358 aa).

The next 3 membrane-spanning stretches (helical) occupy residues Tyr28–Ile45, His117–Leu132, and Trp141–Val155. Position 117 (His117) interacts with chlorophyll a. Residue Tyr125 participates in pheophytin a binding. Residues Asp169 and Glu188 each contribute to the [CaMn4O5] cluster site. A helical membrane pass occupies residues Phe196–Leu217. Chlorophyll a is bound at residue His197. A quinone contacts are provided by residues His214 and Ser263–Phe264. His214 is a Fe cation binding site. Residue His271 participates in Fe cation binding. A helical membrane pass occupies residues Phe273–Met287. [CaMn4O5] cluster-binding residues include His331, Glu332, Asp341, and Ala343. Residues Thr344–Gly358 constitute a propeptide that is removed on maturation.

The protein belongs to the reaction center PufL/M/PsbA/D family. PSII is composed of 1 copy each of membrane proteins PsbA, PsbB, PsbC, PsbD, PsbE, PsbF, PsbH, PsbI, PsbJ, PsbK, PsbL, PsbM, PsbT, PsbX, PsbY, PsbZ, Psb30/Ycf12, peripheral proteins PsbO, CyanoQ (PsbQ), PsbU, PsbV and a large number of cofactors. It forms dimeric complexes. It depends on The D1/D2 heterodimer binds P680, chlorophylls that are the primary electron donor of PSII, and subsequent electron acceptors. It shares a non-heme iron and each subunit binds pheophytin, quinone, additional chlorophylls, carotenoids and lipids. D1 provides most of the ligands for the Mn4-Ca-O5 cluster of the oxygen-evolving complex (OEC). There is also a Cl(-1) ion associated with D1 and D2, which is required for oxygen evolution. The PSII complex binds additional chlorophylls, carotenoids and specific lipids. as a cofactor. Tyr-160 forms a radical intermediate that is referred to as redox-active TyrZ, YZ or Y-Z. In terms of processing, C-terminally processed by CtpA; processing is essential to allow assembly of the oxygen-evolving complex and thus photosynthetic growth.

It is found in the cellular thylakoid membrane. It carries out the reaction 2 a plastoquinone + 4 hnu + 2 H2O = 2 a plastoquinol + O2. Functionally, photosystem II (PSII) is a light-driven water:plastoquinone oxidoreductase that uses light energy to abstract electrons from H(2)O, generating O(2) and a proton gradient subsequently used for ATP formation. It consists of a core antenna complex that captures photons, and an electron transfer chain that converts photonic excitation into a charge separation. The D1/D2 (PsbA/PsbD) reaction center heterodimer binds P680, the primary electron donor of PSII as well as several subsequent electron acceptors. This Synechococcus sp. (strain RCC307) protein is Photosystem II protein D1 2.